Reading from the N-terminus, the 37-residue chain is Large ribosomal subunit protein bL36A (37 aa).

The protein belongs to the bacterial ribosomal protein bL36 family.

This chain is Large ribosomal subunit protein bL36A, found in Haemophilus ducreyi (strain 35000HP / ATCC 700724).